The primary structure comprises 313 residues: tRNA dimethylallyltransferase (313 aa).

17–24 (GPTASGKT) provides a ligand contact to ATP. 19 to 24 (TASGKT) is a binding site for substrate. 3 interaction with substrate tRNA regions span residues 42–45 (DSAL), 166–170 (QRLSR), and 247–252 (RCVGYR).

It belongs to the IPP transferase family. As to quaternary structure, monomer. Mg(2+) serves as cofactor.

It carries out the reaction adenosine(37) in tRNA + dimethylallyl diphosphate = N(6)-dimethylallyladenosine(37) in tRNA + diphosphate. Catalyzes the transfer of a dimethylallyl group onto the adenine at position 37 in tRNAs that read codons beginning with uridine, leading to the formation of N6-(dimethylallyl)adenosine (i(6)A). The protein is tRNA dimethylallyltransferase of Yersinia pseudotuberculosis serotype O:1b (strain IP 31758).